The chain runs to 712 residues: MFDTHTVEIEWAGRPLKLETGKIARQADGAVLATYGETVVLATVVSAKAPKPGQDFFPLTVNYQEKTYAAGKIPGGYFKREGRPSENETLVSRLIDRPIRPLFPEGYKNDTQVVVTVVQHDLENNPDILSMIASSAALTLSGVPFMGPVGGARVGYINGEYVLNPHLDEMDESSLDLVVAGTYDAVLMVESEAKELPEDVMLGAVMFGHKGFQPVLDAIIKLAEVAAKEPRDFQPEDYSELEGEMLKHFEAELREAYKITQKADRYAAVDAVKAKVKAHFLPEEGEAKYTAEEVGAIFKHLQAKIVRWNILDTKSRIDGRDLETVRPIVSEVGLLPRTHGSALFTRGETQAIVVATLGTGEDEQYVDSLTGMYKERFLLHYNFPPFSVGETGRMGSPGRREIGHGKLAWRAIRPMLPSAEQFPYTLRVVSEITESNGSSSMATVCGTSLALMDAGVPLAKPVAGIAMGLILEGDRFAVLSDILGDEDHLGDMDFKVAGTADGITSLQMDIKIAGITEEIMKVALGQAKGGRAHILGEMAKAITESRGQLGEFAPRIEVMNIPVDKIREVIGSGGKVIREIVEKTGAKINIEDDGTVKIASSSGKEIEAARKWIHSIVAEPEIGQIYEGTVVKTADFGAFVNFFGARDGLVHISQLASERVAKTTDVVKEGDKVWVKLLGFDERGKVRLSMKVVDQATGQEIPNEKKKEEAAE.

D487 and D493 together coordinate Mg(2+). A KH domain is found at 554-613 (PRIEVMNIPVDKIREVIGSGGKVIREIVEKTGAKINIEDDGTVKIASSSGKEIEAARKWI). An S1 motif domain is found at 623-691 (GQIYEGTVVK…ERGKVRLSMK (69 aa)).

The protein belongs to the polyribonucleotide nucleotidyltransferase family. Mg(2+) is required as a cofactor.

It is found in the cytoplasm. The catalysed reaction is RNA(n+1) + phosphate = RNA(n) + a ribonucleoside 5'-diphosphate. Functionally, involved in mRNA degradation. Catalyzes the phosphorolysis of single-stranded polyribonucleotides processively in the 3'- to 5'-direction. In Rhizobium etli (strain ATCC 51251 / DSM 11541 / JCM 21823 / NBRC 15573 / CFN 42), this protein is Polyribonucleotide nucleotidyltransferase.